The primary structure comprises 135 residues: Large ribosomal subunit protein bL21 (135 aa).

The disordered stretch occupies residues 85–135; the sequence is YRVKRGHRQQYTQIEIESLNANGPASSDDEEAAETSDAEPDEDPEAEPAEA. The span at 93–107 shows a compositional bias: polar residues; it reads QQYTQIEIESLNANG. The segment covering 111-135 has biased composition (acidic residues); sequence SDDEEAAETSDAEPDEDPEAEPAEA.

Belongs to the bacterial ribosomal protein bL21 family. In terms of assembly, part of the 50S ribosomal subunit. Contacts protein L20.

In terms of biological role, this protein binds to 23S rRNA in the presence of protein L20. This Salinibacter ruber (strain DSM 13855 / M31) protein is Large ribosomal subunit protein bL21.